Here is a 351-residue protein sequence, read N- to C-terminus: Hydroxymethylglutaryl-CoA synthase (351 aa).

Glutamate 80 functions as the Proton donor/acceptor in the catalytic mechanism. Cysteine 112 functions as the Acyl-thioester intermediate in the catalytic mechanism. (3S)-3-hydroxy-3-methylglutaryl-CoA is bound by residues cysteine 112 and serine 153. Arginine 199 provides a ligand contact to CoA. 2 residues coordinate (3S)-3-hydroxy-3-methylglutaryl-CoA: threonine 201 and histidine 234. The Proton donor/acceptor role is filled by histidine 234. Residue lysine 239 coordinates CoA. Positions 243, 266, and 296 each coordinate (3S)-3-hydroxy-3-methylglutaryl-CoA.

Belongs to the thiolase-like superfamily. Archaeal HMG-CoA synthase family. As to quaternary structure, interacts with acetoacetyl-CoA thiolase that catalyzes the precedent step in the pathway and with a DUF35 protein. The acetoacetyl-CoA thiolase/HMG-CoA synthase complex channels the intermediate via a fused CoA-binding site, which allows for efficient coupling of the endergonic thiolase reaction with the exergonic HMGCS reaction.

It catalyses the reaction acetoacetyl-CoA + acetyl-CoA + H2O = (3S)-3-hydroxy-3-methylglutaryl-CoA + CoA + H(+). It participates in metabolic intermediate biosynthesis; (R)-mevalonate biosynthesis; (R)-mevalonate from acetyl-CoA: step 2/3. Its function is as follows. Catalyzes the condensation of acetyl-CoA with acetoacetyl-CoA to form 3-hydroxy-3-methylglutaryl-CoA (HMG-CoA). Functions in the mevalonate (MVA) pathway leading to isopentenyl diphosphate (IPP), a key precursor for the biosynthesis of isoprenoid compounds that are building blocks of archaeal membrane lipids. This is Hydroxymethylglutaryl-CoA synthase from Thermoplasma volcanium (strain ATCC 51530 / DSM 4299 / JCM 9571 / NBRC 15438 / GSS1).